The chain runs to 240 residues: Zinc finger CCCH domain-containing protein 52 (240 aa).

Disordered stretches follow at residues 1–37 and 81–106; these read MDAR…GLGS and SQVS…PGSG. The C3H1-type 1 zinc-finger motif lies at 36–64; the sequence is GSKSKPCTKFFSTSGCPFGDNCHFLHYVP. The span at 89-104 shows a compositional bias: gly residues; the sequence is GSGGPGGRFSGRGDPG. The region spanning 113–177 is the KH domain; sequence ASTSKISVDA…EQINVASGMV (65 aa). Residues 205–232 form a C3H1-type 2 zinc finger; sequence NYKTKICDRYSKGNCTYGDRCHFAHGES.

In Arabidopsis thaliana (Mouse-ear cress), this protein is Zinc finger CCCH domain-containing protein 52.